A 331-amino-acid polypeptide reads, in one-letter code: Beta-ketoacyl-[acyl-carrier-protein] synthase III (331 aa).

Catalysis depends on residues Cys113 and His256. The tract at residues 257 to 261 (QANKR) is ACP-binding. The active site involves Asn286.

This sequence belongs to the thiolase-like superfamily. FabH family. In terms of assembly, homodimer.

The protein localises to the cytoplasm. The catalysed reaction is malonyl-[ACP] + acetyl-CoA + H(+) = 3-oxobutanoyl-[ACP] + CO2 + CoA. Its pathway is lipid metabolism; fatty acid biosynthesis. Its function is as follows. Catalyzes the condensation reaction of fatty acid synthesis by the addition to an acyl acceptor of two carbons from malonyl-ACP. Catalyzes the first condensation reaction which initiates fatty acid synthesis and may therefore play a role in governing the total rate of fatty acid production. Possesses both acetoacetyl-ACP synthase and acetyl transacylase activities. Its substrate specificity determines the biosynthesis of branched-chain and/or straight-chain of fatty acids. This is Beta-ketoacyl-[acyl-carrier-protein] synthase III from Solibacter usitatus (strain Ellin6076).